The following is a 291-amino-acid chain: Probable L-ascorbate peroxidase 4, peroxisomal (291 aa).

Histidine 40 acts as the Proton acceptor in catalysis. Histidine 160 lines the heme b pocket. Positions 161, 177, and 184 each coordinate K(+). A helical transmembrane segment spans residues 263–283 (VLAQSAVGVAVAAAVVIVSYL).

Belongs to the peroxidase family. Ascorbate peroxidase subfamily. Requires heme b as cofactor. Expressed in leaves, stems and flowers.

It localises to the peroxisome membrane. The enzyme catalyses L-ascorbate + H2O2 = L-dehydroascorbate + 2 H2O. Functionally, plays a key role in hydrogen peroxide removal. The sequence is that of Probable L-ascorbate peroxidase 4, peroxisomal from Oryza sativa subsp. japonica (Rice).